We begin with the raw amino-acid sequence, 241 residues long: Ribosome-inactivating protein luffaculin 1 (241 aa).

4 N-linked (GlcNAc...) asparagine glycosylation sites follow: Asn28, Asn33, Asn77, and Asn84. Glu159 is an active-site residue. An N-linked (GlcNAc...) asparagine glycan is attached at Asn205.

This sequence belongs to the ribosome-inactivating protein family. Type 1 RIP subfamily.

It catalyses the reaction Endohydrolysis of the N-glycosidic bond at one specific adenosine on the 28S rRNA.. The polypeptide is Ribosome-inactivating protein luffaculin 1 (Luffa acutangula (Ridged gourd)).